The following is a 158-amino-acid chain: MLNQLDNLTERVRGSNKLVDRWLHVRKHLLVAYYNLVGIKPGKESYMRLNEKALDDFCQSLVDYLSAGHFSIYERILHKLEGNGQLARAAKIWPQLEANTQQIMDYYDSSLETAIDHDNYLEFQQVLSDIGEALEARFVLEDKLILLVLDAARVKYPA.

It belongs to the Rsd/AlgQ family. Interacts with RpoD.

It is found in the cytoplasm. Its function is as follows. Binds RpoD and negatively regulates RpoD-mediated transcription activation by preventing the interaction between the primary sigma factor RpoD with the catalytic core of the RNA polymerase and with promoter DNA. May be involved in replacement of the RNA polymerase sigma subunit from RpoD to RpoS during the transition from exponential growth to the stationary phase. The polypeptide is Regulator of sigma D (Escherichia fergusonii (strain ATCC 35469 / DSM 13698 / CCUG 18766 / IAM 14443 / JCM 21226 / LMG 7866 / NBRC 102419 / NCTC 12128 / CDC 0568-73)).